Reading from the N-terminus, the 677-residue chain is Threonine--tRNA ligase (677 aa).

Positions 1-59 (MAQATISITVNGEAKEVEATTTGVELFAEDKNIIAVKINGENRDLYTPLNDGDTVDPIA) constitute a TGS domain. A catalytic region spans residues 255-561 (DHRKLGAEMD…LLEHYAGAFP (307 aa)). Zn(2+) is bound by residues cysteine 360, histidine 411, and histidine 538.

The protein belongs to the class-II aminoacyl-tRNA synthetase family. In terms of assembly, homodimer. It depends on Zn(2+) as a cofactor.

It localises to the cytoplasm. The enzyme catalyses tRNA(Thr) + L-threonine + ATP = L-threonyl-tRNA(Thr) + AMP + diphosphate + H(+). Functionally, catalyzes the attachment of threonine to tRNA(Thr) in a two-step reaction: L-threonine is first activated by ATP to form Thr-AMP and then transferred to the acceptor end of tRNA(Thr). Also edits incorrectly charged L-seryl-tRNA(Thr). This is Threonine--tRNA ligase from Bifidobacterium longum (strain NCC 2705).